Consider the following 511-residue polypeptide: Voltage-gated potassium channel KCNC1 (511 aa).

At 1-190 (MGQGDESERI…EDPYSSRYAR (190 aa)) the chain is on the cytoplasmic side. Phosphoserine is present on Ser-44. Zn(2+)-binding residues include His-77, Cys-83, Cys-104, and Cys-105. The disordered stretch occupies residues 121-147 (SFGGAPLDNSADDADADGPGDSGDGED). Phosphoserine occurs at positions 130, 142, 158, and 160. A compositionally biased stretch (acidic residues) spans 130–147 (SADDADADGPGDSGDGED). Residues 191–209 (YVAFASLFFILVSITTFCL) form a helical membrane-spanning segment. N-linked (GlcNAc...) asparagine glycans are attached at residues Asn-220 and Asn-229. The chain crosses the membrane as a helical span at residues 248–267 (IEGVCVVWFTFEFLMRVVFC). At 268–276 (PNKVEFIKN) the chain is on the cytoplasmic side. Residues 277–295 (SLNIIDFVAILPFYLEVGL) form a helical membrane-spanning segment. A helical; Voltage-sensor transmembrane segment spans residues 309–331 (FLRVVRFVRILRIFKLTRHFVGL). The Cytoplasmic portion of the chain corresponds to 332 to 344 (RVLGHTLRASTNE). The chain crosses the membrane as a helical span at residues 345–366 (FLLLIIFLALGVLIFATMIYYA). 4 residues coordinate K(+): Thr-400, Leu-401, Gly-402, and Tyr-403. The Selectivity filter signature appears at 400 to 405 (TLGYGD). Residues 415–436 (LVGALCALAGVLTIAMPVPVIV) traverse the membrane as a helical segment. Residues 437 to 511 (NNFGMYYSLA…GRKPLRGMSI (75 aa)) lie on the Cytoplasmic side of the membrane. Position 474 is a phosphoserine (Ser-474). Thr-483 carries the phosphothreonine modification.

The protein belongs to the potassium channel family. C (Shaw) (TC 1.A.1.2) subfamily. Kv3.1/KCNC1 sub-subfamily. Homotetramer. Homomultimer. Heteromultimer with KCNG3, KCNG4 and KCNV2. Heteromultimer with KCNC2. Heterotetramer with KCNC3. Interacts with the ancillary subunits KCNE1 and KCNE2; the interaction modulates channel activity. N-glycosylated; contains sialylated glycans. As to expression, detected in cerebellum. Detected in brain (at protein level). Detected in brain.

The protein localises to the cell membrane. Its subcellular location is the cell projection. The protein resides in the axon. It localises to the presynaptic cell membrane. The catalysed reaction is K(+)(in) = K(+)(out). Functionally, voltage-gated potassium channel that opens in response to the voltage difference across the membrane and through which potassium ions pass in accordance with their electrochemical gradient. The mechanism is time-dependent and inactivation is slow. Plays an important role in the rapid repolarization of fast-firing brain neurons. Can form functional homotetrameric channels and heterotetrameric channels that contain variable proportions of KCNC2, and possibly other family members as well. Contributes to fire sustained trains of very brief action potentials at high frequency in pallidal neurons. In Mus musculus (Mouse), this protein is Voltage-gated potassium channel KCNC1.